Consider the following 283-residue polypeptide: Stage II sporulation protein Q (283 aa).

The helical transmembrane segment at 22 to 42 threads the bilayer; sequence WVFPAIYLVSAAVILTAVLWY. Residues 228 to 283 are disordered; it reads EKAATQETEESIQQSSEKKDGSTEKGTEEKSGEKKDDSTDKSGSKESSTTEDTEQS. Over residues 243-271 the composition is skewed to basic and acidic residues; it reads SEKKDGSTEKGTEEKSGEKKDDSTDKSGS.

Interacts with SpoIIIAH and SpoIIE.

Its subcellular location is the forespore membrane. In terms of biological role, involved in forespore engulfment and required for anchoring membrane proteins on the forespore side of the septal membrane. Forms a channel with SpoIIIAH that is open on the forespore end and closed (or gated) on the mother cell end. This allows sigma-E-directed gene expression in the mother-cell compartment of the sporangium to trigger the activation of sigma-G forespore-specific gene expression by a pathway of intercellular signaling. In Bacillus subtilis (strain 168), this protein is Stage II sporulation protein Q (spoIIQ).